Here is a 480-residue protein sequence, read N- to C-terminus: ATP synthase subunit beta, chloroplastic (480 aa).

Residue 161 to 168 (GGAGVGKT) participates in ATP binding.

The protein belongs to the ATPase alpha/beta chains family. As to quaternary structure, F-type ATPases have 2 components, CF(1) - the catalytic core - and CF(0) - the membrane proton channel. CF(1) has five subunits: alpha(3), beta(3), gamma(1), delta(1), epsilon(1). CF(0) has four main subunits: a(1), b(1), b'(1) and c(9-12).

The protein resides in the plastid. It localises to the chloroplast thylakoid membrane. The catalysed reaction is ATP + H2O + 4 H(+)(in) = ADP + phosphate + 5 H(+)(out). Its function is as follows. Produces ATP from ADP in the presence of a proton gradient across the membrane. The catalytic sites are hosted primarily by the beta subunits. The protein is ATP synthase subunit beta, chloroplastic of Euglena gracilis.